Here is a 430-residue protein sequence, read N- to C-terminus: Adenylosuccinate synthetase (430 aa).

Residues 13 to 19 and 41 to 43 contribute to the GTP site; these read GDEGKGK and GHT. Aspartate 14 functions as the Proton acceptor in the catalytic mechanism. Residues aspartate 14 and glycine 41 each contribute to the Mg(2+) site. Residues 14 to 17, 39 to 42, threonine 130, arginine 144, glutamine 225, threonine 240, and arginine 304 contribute to the IMP site; these read DEGK and NAGH. Histidine 42 (proton donor) is an active-site residue. Residue 300-306 coordinates substrate; it reads STTGRAR. Residues arginine 306, 332–334, and 414–416 each bind GTP; these read KLD and STG.

Belongs to the adenylosuccinate synthetase family. In terms of assembly, homodimer. It depends on Mg(2+) as a cofactor.

It localises to the cytoplasm. It catalyses the reaction IMP + L-aspartate + GTP = N(6)-(1,2-dicarboxyethyl)-AMP + GDP + phosphate + 2 H(+). The protein operates within purine metabolism; AMP biosynthesis via de novo pathway; AMP from IMP: step 1/2. Its function is as follows. Plays an important role in the de novo pathway of purine nucleotide biosynthesis. Catalyzes the first committed step in the biosynthesis of AMP from IMP. This is Adenylosuccinate synthetase from Pseudomonas putida (strain ATCC 700007 / DSM 6899 / JCM 31910 / BCRC 17059 / LMG 24140 / F1).